A 910-amino-acid chain; its full sequence is ZZ-type zinc finger-containing protein 3 (910 aa).

Disordered stretches follow at residues 41-117 (AHPE…RQAE) and 133-153 (EATN…PGEH). Positions 67 to 84 (QKGTNNGRTSDVRQQSAR) are enriched in polar residues. Residues Ser-89, Ser-96, Ser-137, Ser-138, and Ser-142 each carry the phosphoserine modification. Residues 96–116 (SSSEKDDLERQALESCERRQA) show a composition bias toward basic and acidic residues. A compositionally biased stretch (basic and acidic residues) spans 142–153 (SPVKPDKEPGEH). Lys-283 participates in a covalent cross-link: Glycyl lysine isopeptide (Lys-Gly) (interchain with G-Cter in SUMO2). Disordered stretches follow at residues 303-358 (TAES…VSGE), 373-444 (TSLS…PQDG), and 609-641 (ARPK…SHNR). Polar residues-rich tracts occupy residues 331–347 (SSAS…NPLD) and 397–434 (SSPT…SESP). Lys-401 bears the N6-acetyllysine mark. Position 613 is a phosphoserine (Ser-613). Residues 613–622 (SPLDPKKDGE) are compositionally biased toward basic and acidic residues. Lys-654 participates in a covalent cross-link: Glycyl lysine isopeptide (Lys-Gly) (interchain with G-Cter in SUMO2). In terms of domain architecture, HTH myb-type spans 654-714 (KPETFNQLWT…RVQKYFIKLT (61 aa)). Residues 687–710 (WQKIADELGNRTAKQVASRVQKYF) constitute a DNA-binding region (H-T-H motif). N6-acetyllysine is present on Lys-708. Lys-715 is covalently cross-linked (Glycyl lysine isopeptide (Lys-Gly) (interchain with G-Cter in SUMO2)). The segment at 825–884 (HVGFKCDNCGVEPIQGVRWHCQDCPPEMSLDFCDSCSDCPHETDIHKEDHQLEPVYKSET) adopts a ZZ-type zinc-finger fold. Zn(2+) contacts are provided by Cys-830, Cys-833, Cys-845, Cys-848, Cys-857, Cys-860, His-870, and His-874.

As to quaternary structure, component of the ADA2A-containing complex (ATAC), composed of KAT14, KAT2A, TADA2L, TADA3L, ZZ3, MBIP, WDR5, YEATS2, CCDC101 and DR1. Interacts via (ZZ-type zinc finger) with histone H3 in a methylation-independent manner and acetylation on 'Lys-4' (H3K4ac) moderately enhances the interaction.

The protein resides in the nucleus. Functionally, histone H3 reader that is required for the ATAC complex-mediated maintenance of histone acetylation and gene activation. Component of the ATAC complex, a complex with histone acetyltransferase activity on histones H3 and H4. The polypeptide is ZZ-type zinc finger-containing protein 3 (Zzz3) (Mus musculus (Mouse)).